We begin with the raw amino-acid sequence, 430 residues long: MSAFGNPFTSGAKPNLSNTSGINPFTNNAASTNNMGGSAFGRPSFGTANTMTGGTTTSAFGMPQFGTNTGNTGNTSISAFGNTSNAAKPSAFGAPAFGSSAPINVNPPSTTSAFGAPSFGSTGFGAMAATSNPFGKSPGSMGSAFGQPAFGANKTAIPSSSVSNSNNSAFGAASNTPLTTTSPFGSLQQNASQNASSTSSAFGKPTFGAATNTQSPFGTIQNTSTSSGTGVSPFGTFGTNSNNKSPFSNLQSGAGAGSSPFGTTTSKANNNNNVGSSAFGTTNNQSPFSGGSGGTFGSASNLNKNTNGNFQSSFGNKGFSFGITPQNDANKVSQSNPSFGQTMPNTDPNISLKSNGNATSFGFGQQQMNATNVNANTATGKIRFVQGLSSEKDGILELADLAEETLKIFRANKFELGLVPDIPPPPALVA.

Residues 1–68 (MSAFGNPFTS…AFGMPQFGTN (68 aa)) form a disordered region. The stretch at 2-5 (SAFG) is one SXFG 1 repeat. The span at 15-36 (NLSNTSGINPFTNNAASTNNMG) shows a compositional bias: polar residues. 2 SAFGXPXFG repeats span residues 38–46 (SAFGRPSFG) and 58–66 (SAFGMPQFG). The span at 45 to 68 (FGTANTMTGGTTTSAFGMPQFGTN) shows a compositional bias: low complexity. One copy of the SXFG 2 repeat lies at 78-81 (SAFG). SAFGXPXFG repeat units lie at residues 90–98 (SAFGAPAFG) and 112–120 (SAFGAPSFG). Residues 121 to 230 (STGFGAMAAT…QNTSTSSGTG (110 aa)) form an interactions with CRM1 and GFD1 region. FG repeat units lie at residues 124–125 (FG) and 134–135 (FG). Ser137 bears the Phosphoserine mark. The SAFGXPXFG 5 repeat unit spans residues 143–151 (SAFGQPAFG). 2 SXFG repeats span residues 168-171 (SAFG) and 182-185 (SPFG). The segment at 180-294 (TTSPFGSLQQ…QSPFSGGSGG (115 aa)) is disordered. The segment covering 186 to 201 (SLQQNASQNASSTSSA) has biased composition (low complexity). Residues 200–208 (SAFGKPTFG) form an SAFGXPXFG 6 repeat. A compositionally biased stretch (polar residues) spans 209–230 (AATNTQSPFGTIQNTSTSSGTG). SXFG repeat units lie at residues 215-218 (SPFG) and 232-235 (SPFG). Composition is skewed to polar residues over residues 237 to 252 (FGTN…NLQS) and 260 to 285 (PFGT…TNNQ). SXFG repeat units lie at residues 259 to 262 (SPFG) and 277 to 280 (SAFG). The stretch at 296–297 (FG) is one FG 3 repeat. Ser298 carries the post-translational modification Phosphoserine. An SXFG 9 repeat occupies 312–315 (SSFG). 3 FG repeats span residues 319-322 (FSFG), 339-340 (FG), and 361-364 (FGFG). Residues 319 to 346 (FSFGITPQNDANKVSQSNPSFGQTMPNT) are disordered. Residues 323–346 (ITPQNDANKVSQSNPSFGQTMPNT) show a composition bias toward polar residues. Positions 365–430 (QQQMNATNVN…DIPPPPALVA (66 aa)) are interaction with GLE1.

In terms of assembly, component of the nuclear pore complex (NPC). NPC constitutes the exclusive means of nucleocytoplasmic transport. NPCs allow the passive diffusion of ions and small molecules and the active, nuclear transport receptor-mediated bidirectional transport of macromolecules such as proteins, RNAs, ribonucleoparticles (RNPs), and ribosomal subunits across the nuclear envelope. Due to its 8-fold rotational symmetry, all subunits are present with 8 copies or multiples thereof. NUP42 interacts with the NUP82 subcomplex. It interacts directly with GLE1, and through its FG repeats with GFD1, the heterodimeric mRNA transport factor MEX67/MTR2, and the karyopherin CRM1.

It is found in the nucleus. The protein resides in the nuclear pore complex. It localises to the nucleus membrane. Functions as a component of the nuclear pore complex (NPC). NPC components, collectively referred to as nucleoporins (NUPs), can play the role of both NPC structural components and of docking or interaction partners for transiently associated nuclear transport factors. Active directional transport is assured by both, a Phe-Gly (FG) repeat affinity gradient for these transport factors across the NPC and a transport cofactor concentration gradient across the nuclear envelope (GSP1 and GSP2 GTPases associated predominantly with GTP in the nucleus, with GDP in the cytoplasm). NUP42 is specifically important for nuclear protein and mRNA export. The polypeptide is Nucleoporin NUP42 (NUP42) (Saccharomyces cerevisiae (strain ATCC 204508 / S288c) (Baker's yeast)).